The sequence spans 257 residues: tRNA-cytidine(32) 2-sulfurtransferase (257 aa).

The PP-loop motif motif lies at 37–42; sequence SGGKDS. Residues Cys112, Cys115, and Cys202 each coordinate [4Fe-4S] cluster.

Belongs to the TtcA family. Homodimer. Mg(2+) is required as a cofactor. The cofactor is [4Fe-4S] cluster.

The protein localises to the cytoplasm. It catalyses the reaction cytidine(32) in tRNA + S-sulfanyl-L-cysteinyl-[cysteine desulfurase] + AH2 + ATP = 2-thiocytidine(32) in tRNA + L-cysteinyl-[cysteine desulfurase] + A + AMP + diphosphate + H(+). Its pathway is tRNA modification. Functionally, catalyzes the ATP-dependent 2-thiolation of cytidine in position 32 of tRNA, to form 2-thiocytidine (s(2)C32). The sulfur atoms are provided by the cysteine/cysteine desulfurase (IscS) system. This Geobacter metallireducens (strain ATCC 53774 / DSM 7210 / GS-15) protein is tRNA-cytidine(32) 2-sulfurtransferase.